Reading from the N-terminus, the 792-residue chain is Probable exo-1,4-beta-xylosidase xlnD (792 aa).

A signal peptide spans 1–20; the sequence is MSVAKSIAAVLVALLPGALA. Residues Asn-23, Asn-87, Asn-118, Asn-142, and Asn-246 are each glycosylated (N-linked (GlcNAc...) asparagine). Asp-310 is a catalytic residue. Residues Asn-326, Asn-385, Asn-404, Asn-440, Asn-477, Asn-518, Asn-679, and Asn-701 are each glycosylated (N-linked (GlcNAc...) asparagine).

Belongs to the glycosyl hydrolase 3 family.

Its subcellular location is the secreted. It catalyses the reaction Hydrolysis of (1-&gt;4)-beta-D-xylans, to remove successive D-xylose residues from the non-reducing termini.. It participates in glycan degradation; xylan degradation. In terms of biological role, xylan 1,4-beta-xylosidase involved in the hydrolysis of xylan, a major structural heterogeneous polysaccharide found in plant biomass representing the second most abundant polysaccharide in the biosphere, after cellulose. The chain is Probable exo-1,4-beta-xylosidase xlnD (xlnD) from Aspergillus fumigatus (strain CBS 144.89 / FGSC A1163 / CEA10) (Neosartorya fumigata).